The following is a 60-amino-acid chain: Large ribosomal subunit protein eL37 (60 aa).

Zn(2+)-binding residues include Cys19, Cys22, Cys34, and Cys37. The segment at 19-37 (CRRCGRMSYHKRHKICSSC) adopts a C4-type zinc-finger fold.

Belongs to the eukaryotic ribosomal protein eL37 family. The cofactor is Zn(2+).

In terms of biological role, binds to the 23S rRNA. In Methanospirillum hungatei JF-1 (strain ATCC 27890 / DSM 864 / NBRC 100397 / JF-1), this protein is Large ribosomal subunit protein eL37.